Here is a 319-residue protein sequence, read N- to C-terminus: Acetyl-coenzyme A carboxylase carboxyl transferase subunit alpha (319 aa).

One can recognise a CoA carboxyltransferase C-terminal domain in the interval 32-293 (NVDTEVRALE…KAVLLNELEA (262 aa)).

It belongs to the AccA family. As to quaternary structure, acetyl-CoA carboxylase is a heterohexamer composed of biotin carboxyl carrier protein (AccB), biotin carboxylase (AccC) and two subunits each of ACCase subunit alpha (AccA) and ACCase subunit beta (AccD).

It localises to the cytoplasm. It catalyses the reaction N(6)-carboxybiotinyl-L-lysyl-[protein] + acetyl-CoA = N(6)-biotinyl-L-lysyl-[protein] + malonyl-CoA. The protein operates within lipid metabolism; malonyl-CoA biosynthesis; malonyl-CoA from acetyl-CoA: step 1/1. Functionally, component of the acetyl coenzyme A carboxylase (ACC) complex. First, biotin carboxylase catalyzes the carboxylation of biotin on its carrier protein (BCCP) and then the CO(2) group is transferred by the carboxyltransferase to acetyl-CoA to form malonyl-CoA. This chain is Acetyl-coenzyme A carboxylase carboxyl transferase subunit alpha, found in Xylella fastidiosa (strain 9a5c).